Consider the following 275-residue polypeptide: Dermonecrotic toxin LamSicTox-alphaIV1i (275 aa).

Residue H5 is part of the active site. E25 and D27 together coordinate Mg(2+). The active-site Nucleophile is H41. Cystine bridges form between C45-C51 and C47-C192. D85 is a Mg(2+) binding site.

The protein belongs to the arthropod phospholipase D family. Class II subfamily. Requires Mg(2+) as cofactor. Expressed by the venom gland.

The protein localises to the secreted. The enzyme catalyses an N-(acyl)-sphingosylphosphocholine = an N-(acyl)-sphingosyl-1,3-cyclic phosphate + choline. It catalyses the reaction an N-(acyl)-sphingosylphosphoethanolamine = an N-(acyl)-sphingosyl-1,3-cyclic phosphate + ethanolamine. The catalysed reaction is a 1-acyl-sn-glycero-3-phosphocholine = a 1-acyl-sn-glycero-2,3-cyclic phosphate + choline. It carries out the reaction a 1-acyl-sn-glycero-3-phosphoethanolamine = a 1-acyl-sn-glycero-2,3-cyclic phosphate + ethanolamine. Its function is as follows. Dermonecrotic toxins cleave the phosphodiester linkage between the phosphate and headgroup of certain phospholipids (sphingolipid and lysolipid substrates), forming an alcohol (often choline) and a cyclic phosphate. This toxin acts on sphingomyelin (SM). It may also act on ceramide phosphoethanolamine (CPE), lysophosphatidylcholine (LPC) and lysophosphatidylethanolamine (LPE), but not on lysophosphatidylserine (LPS), and lysophosphatidylglycerol (LPG). It acts by transphosphatidylation, releasing exclusively cyclic phosphate products as second products. Induces dermonecrosis, hemolysis, increased vascular permeability, edema, inflammatory response, and platelet aggregation. The chain is Dermonecrotic toxin LamSicTox-alphaIV1i from Loxosceles amazonica (Recluse spider).